Here is a 393-residue protein sequence, read N- to C-terminus: Tryptophan synthase beta chain (393 aa).

Lys86 bears the N6-(pyridoxal phosphate)lysine mark.

Belongs to the TrpB family. Tetramer of two alpha and two beta chains. The cofactor is pyridoxal 5'-phosphate.

The enzyme catalyses (1S,2R)-1-C-(indol-3-yl)glycerol 3-phosphate + L-serine = D-glyceraldehyde 3-phosphate + L-tryptophan + H2O. It participates in amino-acid biosynthesis; L-tryptophan biosynthesis; L-tryptophan from chorismate: step 5/5. In terms of biological role, the beta subunit is responsible for the synthesis of L-tryptophan from indole and L-serine. In Alteromonas mediterranea (strain DSM 17117 / CIP 110805 / LMG 28347 / Deep ecotype), this protein is Tryptophan synthase beta chain.